Consider the following 202-residue polypeptide: Nucleoside triphosphate pyrophosphatase (202 aa).

Residue Asp79 is the Proton acceptor of the active site.

Belongs to the Maf family. The cofactor is a divalent metal cation.

It is found in the cytoplasm. It carries out the reaction a ribonucleoside 5'-triphosphate + H2O = a ribonucleoside 5'-phosphate + diphosphate + H(+). The catalysed reaction is a 2'-deoxyribonucleoside 5'-triphosphate + H2O = a 2'-deoxyribonucleoside 5'-phosphate + diphosphate + H(+). In terms of biological role, nucleoside triphosphate pyrophosphatase. May have a dual role in cell division arrest and in preventing the incorporation of modified nucleotides into cellular nucleic acids. This is Nucleoside triphosphate pyrophosphatase from Rhodopseudomonas palustris (strain BisB18).